Reading from the N-terminus, the 167-residue chain is uncharacterized protein (167 aa).

The first 23 residues, 1–23 (MKRLHKRFLLATFCALFTATLQA), serve as a signal peptide directing secretion. A disulfide bridge connects residues C39 and C77.

It belongs to the fimbrial protein family.

The protein localises to the fimbrium. This is an uncharacterized protein from Escherichia coli (strain K12).